The primary structure comprises 235 residues: Small heat shock protein, chloroplastic (235 aa).

Disordered stretches follow at residues 1–23 (MAYT…TSKI) and 51–80 (TGDN…ERRP). Residues 52–63 (GDNKDTSVDVHH) are compositionally biased toward basic and acidic residues. Polar residues predominate over residues 64–74 (SSAQGGNNQGT). The region spanning 126–235 (SGTGEIRTPW…EKKVIDVQIN (110 aa)) is the sHSP domain.

Belongs to the small heat shock protein (HSP20) family. In fruits, flowers, leaves, and stems.

It is found in the plastid. It localises to the chloroplast. This Solanum lycopersicum (Tomato) protein is Small heat shock protein, chloroplastic (HSP21).